The chain runs to 152 residues: uncharacterized protein (152 aa).

The next 4 membrane-spanning stretches (helical) occupy residues 2 to 22, 26 to 46, 92 to 112, and 128 to 148; these read ENLI…LSFL, FITF…HLIE, VVPI…FILL, and YIIT…YFLK.

Its subcellular location is the membrane. This is an uncharacterized protein from Acanthamoeba polyphaga mimivirus (APMV).